A 328-amino-acid chain; its full sequence is MRTPDFSAIWQASKQLTARIILLAFATFALYVFHDLAFPQGAAAYPFWAQQTAPETPREATGRIVCANCHLAQKPAEVEIPQSVLPDTVFEAVVKIPYDLDSQQVLGDGSKGGLNVGAVLMLPEGFKIAPEDRIPEEMKEKIEGLYFQPYREDQENVVIVGPLPGDQYQEIVFPVLSPDPATNKSIEFGKYSVHLGANRGRGQVYPTGELSNNNAFKASKAGTVTEISQTEEGGYSVTVTTSEGDVVETIPPGPELIVTKGQQVAAGDALTNNPNVGGFGQKDTEVVLQSPGRIKGLMVFLAGIMLAQILLVIKKKQVERVQAAEMNF.

An N-terminal signal peptide occupies residues 1–44; that stretch reads MRTPDFSAIWQASKQLTARIILLAFATFALYVFHDLAFPQGAAA. Residues tyrosine 45, cysteine 66, cysteine 69, and histidine 70 each coordinate heme. A helical transmembrane segment spans residues 294–314; the sequence is IKGLMVFLAGIMLAQILLVIK.

It belongs to the cytochrome f family. The 4 large subunits of the cytochrome b6-f complex are cytochrome b6, subunit IV (17 kDa polypeptide, PetD), cytochrome f and the Rieske protein, while the 4 small subunits are PetG, PetL, PetM and PetN. The complex functions as a dimer. Heme is required as a cofactor.

It localises to the cellular thylakoid membrane. Its function is as follows. Component of the cytochrome b6-f complex, which mediates electron transfer between photosystem II (PSII) and photosystem I (PSI), cyclic electron flow around PSI, and state transitions. The polypeptide is Cytochrome f (Rippkaea orientalis (strain PCC 8801 / RF-1) (Cyanothece sp. (strain PCC 8801))).